Here is a 162-residue protein sequence, read N- to C-terminus: F protein (162 aa).

Residues 1 to 23 (MSTNPKPQKKKTNVTPTVAHRTS) form a disordered region. Residues 13–23 (NVTPTVAHRTS) show a composition bias toward polar residues.

Its subcellular location is the host cytoplasm. It localises to the host perinuclear region. The protein is F protein of Hepatitis C virus genotype 1a (isolate 1) (HCV).